The sequence spans 673 residues: Flotillin family inner membrane protein sll1021 (673 aa).

The helical transmembrane segment at 60 to 80 (LLFFPVVIIAVIFLILVTIFL) threads the bilayer. Residues 639 to 673 (LQDPPSVSPPSAAVSEDDWPDLAPPTETNFSPEEI) form a disordered region. Residues 664–673 (TETNFSPEEI) are compositionally biased toward polar residues.

This sequence belongs to the band 7/mec-2 family. Flotillin subfamily. Homooligomerizes.

It is found in the cell inner membrane. Its subcellular location is the membrane raft. Functionally, found in functional membrane microdomains (FMM) that may be equivalent to eukaryotic membrane rafts. FMMs are highly dynamic and increase in number as cells age. Flotillins are thought to be important factors in membrane fluidity. This chain is Flotillin family inner membrane protein sll1021, found in Synechocystis sp. (strain ATCC 27184 / PCC 6803 / Kazusa).